A 120-amino-acid chain; its full sequence is Large ribosomal subunit protein bL17 (120 aa).

It belongs to the bacterial ribosomal protein bL17 family. In terms of assembly, part of the 50S ribosomal subunit. Contacts protein L32.

In Geobacillus kaustophilus (strain HTA426), this protein is Large ribosomal subunit protein bL17.